The chain runs to 242 residues: Basic agglutinin (242 aa).

N-linked (GlcNAc...) asparagine glycosylation is found at asparagine 45 and asparagine 220.

It belongs to the leguminous lectin family.

In terms of biological role, lectin. This chain is Basic agglutinin (WBAI), found in Psophocarpus tetragonolobus (Winged bean).